Reading from the N-terminus, the 182-residue chain is ATP-dependent protease subunit HslV (182 aa).

Thr7 is an active-site residue. Na(+)-binding residues include Gly162, Cys165, and Thr168.

Belongs to the peptidase T1B family. HslV subfamily. In terms of assembly, a double ring-shaped homohexamer of HslV is capped on each side by a ring-shaped HslU homohexamer. The assembly of the HslU/HslV complex is dependent on binding of ATP.

It localises to the cytoplasm. The catalysed reaction is ATP-dependent cleavage of peptide bonds with broad specificity.. Allosterically activated by HslU binding. Functionally, protease subunit of a proteasome-like degradation complex believed to be a general protein degrading machinery. In Legionella pneumophila subsp. pneumophila (strain Philadelphia 1 / ATCC 33152 / DSM 7513), this protein is ATP-dependent protease subunit HslV.